Here is a 218-residue protein sequence, read N- to C-terminus: MGTPESSREPCPDRILDDVGGAFAMGAVGGSAYHLIRGIYNSPGGARLSGGVQALRMSGPRSGGSFSVWGGLYSTFDCALVYARQKEDPWNSILSGAATGGFLSLRQGLGASARSALVGGVLLAMIEGVGIMLNKVQSTAHNEQFMEDHAATSLPYGMGQISGQSVPVPETSSSSSGSVSWFGSLFKKKKETEDHHSESRTHILESFDAPPVPTYEFK.

The next 4 membrane-spanning stretches (helical) occupy residues 19-36 (VGGA…YHLI), 66-82 (FSVW…ALVY), 89-105 (PWNS…FLSL), and 116-133 (ALVG…GIML).

It belongs to the Tim17/Tim22/Tim23 family. Component of the TIM17:23 complex at least composed of TIM23, TIM17 and TIM50. The complex interacts with the TIM44 component of the PAM complex. In terms of tissue distribution, expressed in flowers, leaves and cotyledons, and at very low levels in roots.

It is found in the mitochondrion inner membrane. In terms of biological role, essential component of the TIM17:23 complex, a complex that mediates the translocation of transit peptide-containing proteins across the mitochondrial inner membrane. Links the inner and outer membranes. The chain is Mitochondrial import inner membrane translocase subunit TIM17-1 (TIM17-1) from Arabidopsis thaliana (Mouse-ear cress).